A 1047-amino-acid chain; its full sequence is Protein masquerade (1047 aa).

Positions 1-30 (MPRHSSTMSRLVLPLIFSILLVSKPSPSQA) are cleaved as a signal peptide. The interval 54 to 87 (KDCPGVCVHTLATLICYEVLDDVACPSPSMKCCI) is CLIP 1. 3 disulfide bridges follow: C56/C85, C60/C78, and C69/C86. An N-linked (GlcNAc...) asparagine glycan is attached at N95. 2 stretches are compositionally biased toward low complexity: residues 98-139 (AVRA…STTP) and 148-175 (KRPATSSTTKATVATTKKPSTTKKVATA). The tract at residues 98–189 (AVRATTTPKT…KEEATKADDA (92 aa)) is disordered. Residues 176–189 (KPKDKEEATKADDA) show a composition bias toward basic and acidic residues. Residues 192 to 224 (DCTGVCVADRIAEYCEAYLTSDGLCKEGTKCCV) form a CLIP 2 region. Intrachain disulfides connect C193–C222, C197–C216, and C206–C223. The N-linked (GlcNAc...) asparagine glycan is linked to N251. Residues 252–335 (QTLSEKSAPA…PLSNKLKSGQ (84 aa)) are disordered. Positions 263–280 (SSSTSTTSTTTTTSTTTT) are enriched in low complexity. N-linked (GlcNAc...) asparagine glycosylation is present at N287. Positions 307-325 (AAEEEEEQETEEDGEEEEP) are enriched in acidic residues. Residues 343 to 374 (ECEGECMNGIFAIFCDDIDSDAFCPGEESCCV) are CLIP 3. 3 cysteine pairs are disulfide-bonded: C344–C372, C348–C366, and C357–C373. The interval 376 to 428 (GGASEATPSSKAPPTKPAIKHAPKPAAKPARPASPPPAPPSSTSGGGGGGDFL) is disordered. Positions 457 to 492 (RCPGFCLLNIMAAFCERPSVLVSTPTTCAKGSVCCD) are CLIP 4. Intrachain disulfides connect C458–C490, C462–C484, and C471–C491. Residues 498 to 527 (APKPKLPPPTPSPTASPTAPPYVLPNTPSP) are disordered. Pro residues predominate over residues 501–527 (PKLPPPTPSPTASPTAPPYVLPNTPSP). The segment at 532-567 (ECPGSCIVSLLSFTCFKNAEMTDLFRCKRSGQICCA) is CLIP 5. Disulfide bonds link C533-C565, C537-C558, and C546-C566. Residue N582 is glycosylated (N-linked (GlcNAc...) asparagine). The interval 583–673 (DTAYYPAPPP…TTTTTTTTPR (91 aa)) is disordered. Pro residues-rich tracts occupy residues 588 to 606 (PAPPPPPIGPPQAYPPQTP), 613 to 638 (NPPPQGPPPQMAPHHPNPYQPPPPAP), and 650 to 661 (GLPPQPQPPMTT). The span at 662-672 (PPTTTTTTTTP) shows a compositional bias: low complexity. 5 disulfide bridges follow: C682–C916, C829–C845, C930–C1001, C961–C981, and C991–C1019. 2 N-linked (GlcNAc...) asparagine glycosylation sites follow: N726 and N794. Positions 803–1043 (VVGGEDGENG…FIGWINQIIS (241 aa)) are peptidase S1.

Belongs to the peptidase S1 family. CLIP subfamily. Proteolytically cleaved and thereafter secreted.

The protein resides in the secreted. The protein localises to the cell projection. It localises to the axon. Its function is as follows. In embryogenesis, has a role in somatic muscle attachment and in the development of axonal pathways probably by stabilizing cell-matrix adhesion and/or by acting as a competitive antagonist of serine proteases. The protein is Protein masquerade of Drosophila melanogaster (Fruit fly).